Here is a 376-residue protein sequence, read N- to C-terminus: Ribosomal RNA large subunit methyltransferase G (376 aa).

The protein belongs to the methyltransferase superfamily. RlmG family.

It localises to the cytoplasm. The enzyme catalyses guanosine(1835) in 23S rRNA + S-adenosyl-L-methionine = N(2)-methylguanosine(1835) in 23S rRNA + S-adenosyl-L-homocysteine + H(+). Functionally, specifically methylates the guanine in position 1835 (m2G1835) of 23S rRNA. The protein is Ribosomal RNA large subunit methyltransferase G of Vibrio vulnificus (strain CMCP6).